The chain runs to 438 residues: Transposon Ty2-GR1 Gag polyprotein (438 aa).

3 stretches are compositionally biased toward polar residues: residues Met1–His11, Ala19–Asn39, and Lys49–Thr60. Disordered stretches follow at residues Met1–Gln86, His360–Ser403, and Val418–Ile438. Residues Glu295 to His397 are RNA-binding. Residues Thr369–Arg381 are compositionally biased toward low complexity.

As to quaternary structure, homotrimer.

It localises to the cytoplasm. Its function is as follows. Capsid protein (CA) is the structural component of the virus-like particle (VLP), forming the shell that encapsulates the retrotransposons dimeric RNA genome. The particles are assembled from trimer-clustered units and there are holes in the capsid shells that allow for the diffusion of macromolecules. CA also has nucleocapsid-like chaperone activity, promoting primer tRNA(i)-Met annealing to the multipartite primer-binding site (PBS), dimerization of Ty2 RNA and initiation of reverse transcription. The chain is Transposon Ty2-GR1 Gag polyprotein (TY2A-GR1) from Saccharomyces cerevisiae (strain ATCC 204508 / S288c) (Baker's yeast).